The following is a 165-amino-acid chain: Cytochrome c-type biogenesis protein CcmE (165 aa).

The Cytoplasmic portion of the chain corresponds to 1-7; it reads MTRKQRR. The chain crosses the membrane as a helical; Signal-anchor for type II membrane protein span at residues 8-28; it reads LMMIGGAGVVLVVAVGLVLNA. The Periplasmic portion of the chain corresponds to 29 to 165; sequence MRGSIVFFST…ASADAMRPAR (137 aa). Heme-binding residues include H122 and Y126. The span at 138–149 shows a compositional bias: basic and acidic residues; the sequence is QGHWKDDYEKKP. Positions 138 to 165 are disordered; that stretch reads QGHWKDDYEKKPPGPGAAASADAMRPAR. Residues 153–165 are compositionally biased toward low complexity; the sequence is GAAASADAMRPAR.

It belongs to the CcmE/CycJ family.

It localises to the cell inner membrane. Functionally, heme chaperone required for the biogenesis of c-type cytochromes. Transiently binds heme delivered by CcmC and transfers the heme to apo-cytochromes in a process facilitated by CcmF and CcmH. This Rhodopseudomonas palustris (strain HaA2) protein is Cytochrome c-type biogenesis protein CcmE.